The sequence spans 189 residues: uncharacterized protein (189 aa).

The span at E105–T115 shows a compositional bias: basic and acidic residues. Residues E105–T189 form a disordered region. The segment covering A116–K136 has biased composition (basic residues). Acidic residues predominate over residues S141–S151. The span at S161–K177 shows a compositional bias: basic and acidic residues. A compositionally biased stretch (acidic residues) spans E178 to T189.

This is an uncharacterized protein from Caenorhabditis elegans.